The sequence spans 489 residues: Phenylalanine--tRNA ligase alpha subunit (489 aa).

L-phenylalanine is bound by residues Thr316, 355-357, Phe395, and Phe420; that span reads QLD.

It belongs to the class-II aminoacyl-tRNA synthetase family. Phe-tRNA synthetase alpha subunit type 2 subfamily. In terms of assembly, tetramer of two alpha and two beta subunits. The cofactor is Mg(2+).

Its subcellular location is the cytoplasm. It catalyses the reaction tRNA(Phe) + L-phenylalanine + ATP = L-phenylalanyl-tRNA(Phe) + AMP + diphosphate + H(+). The protein is Phenylalanine--tRNA ligase alpha subunit of Pyrobaculum aerophilum (strain ATCC 51768 / DSM 7523 / JCM 9630 / CIP 104966 / NBRC 100827 / IM2).